The primary structure comprises 428 residues: Light-independent protochlorophyllide reductase subunit N (428 aa).

[4Fe-4S] cluster-binding residues include Cys-29, Cys-54, and Cys-115.

The protein belongs to the BchN/ChlN family. In terms of assembly, protochlorophyllide reductase is composed of three subunits; BchL, BchN and BchB. Forms a heterotetramer of two BchB and two BchN subunits. [4Fe-4S] cluster is required as a cofactor.

It carries out the reaction chlorophyllide a + oxidized 2[4Fe-4S]-[ferredoxin] + 2 ADP + 2 phosphate = protochlorophyllide a + reduced 2[4Fe-4S]-[ferredoxin] + 2 ATP + 2 H2O. Its pathway is porphyrin-containing compound metabolism; bacteriochlorophyll biosynthesis (light-independent). Component of the dark-operative protochlorophyllide reductase (DPOR) that uses Mg-ATP and reduced ferredoxin to reduce ring D of protochlorophyllide (Pchlide) to form chlorophyllide a (Chlide). This reaction is light-independent. The NB-protein (BchN-BchB) is the catalytic component of the complex. This chain is Light-independent protochlorophyllide reductase subunit N, found in Cereibacter sphaeroides (strain ATCC 17023 / DSM 158 / JCM 6121 / CCUG 31486 / LMG 2827 / NBRC 12203 / NCIMB 8253 / ATH 2.4.1.) (Rhodobacter sphaeroides).